A 295-amino-acid polypeptide reads, in one-letter code: G1/S-specific cyclin-D1 (295 aa).

The Cyclin N-terminal domain occupies 28 to 152 (LRAMLKTEET…LLVNKLKWNL (125 aa)). The interval 262–283 (AQQNVDPKATEEEGEVEEEAGL) is disordered. A Glycyl lysine isopeptide (Lys-Gly) (interchain with G-Cter in ubiquitin) cross-link involves residue Lys269. Residue Thr286 is modified to Phosphothreonine.

The protein belongs to the cyclin family. Cyclin D subfamily. Interacts with either CDK4 or CDK6 protein kinase to form a serine/threonine kinase holoenzyme complex. The cyclin subunit imparts substrate specificity to the complex. Component of the ternary complex CCND1/CDK4/CDKN1B required for nuclear translocation and modulation of CDK4-mediated kinase activity. Interacts directly with CDKN1B. Can form similar complexes with either CDKN1A or CDKN2A. Interacts with UHRF2; the interaction ubiquitinates CCND1 and appears to occur independently of phosphorylation. Interacts with USP2. Interacts (via cyclin N-terminal domain) with INSM1 (via N-terminal region); the interaction competes with the binding of CCND1 to CDK4 during cell cycle progression and inhibits CDK4 activity. Interacts with CDK4; the interaction is prevented with the binding of CCND1 to INSM1 during cell cycle progression. Phosphorylation at Thr-286 by MAP kinases is required for ubiquitination and degradation by the DCX(AMBRA1) complex. It also plays an essential role for recognition by the FBXO31 component of SCF (SKP1-cullin-F-box) protein ligase complex following DNA damage. In terms of processing, ubiquitinated at Lys-269 by the DCX(AMBRA1) complex during the transition from G1 to S cell phase, leading to its degradation: ubiquitination is dependent on Thr-286 phosphorylation. The DCX(AMBRA1) complex represents the major regulator of CCND1 stability during the G1/S transition. Also ubiquitinated by the SCF(FBXO4) and Cul7-RING(FBXW8) ubiquitin-protein ligase complexes. Following DNA damage it is ubiquitinated by the SCF(FBXO31) protein ligase complex. SCF(FBXO31) ubiquitination is dependent on Thr-286 phosphorylation. Ubiquitinated also by UHRF2 apparently in a phosphorylation-independent manner. Ubiquitination leads to its degradation and G1 arrest. Deubiquitinated by USP2; leading to its stabilization. Expressed in the intestinal epithelium.

Its subcellular location is the nucleus. The protein localises to the cytoplasm. The protein resides in the nucleus membrane. Its function is as follows. Regulatory component of the cyclin D1-CDK4 (DC) complex that phosphorylates and inhibits members of the retinoblastoma (RB) protein family including RB1 and regulates the cell-cycle during G(1)/S transition. Phosphorylation of RB1 allows dissociation of the transcription factor E2F from the RB/E2F complex and the subsequent transcription of E2F target genes which are responsible for the progression through the G(1) phase. Hypophosphorylates RB1 in early G(1) phase. Cyclin D-CDK4 complexes are major integrators of various mitogenenic and antimitogenic signals. Also a substrate for SMAD3, phosphorylating SMAD3 in a cell-cycle-dependent manner and repressing its transcriptional activity. Component of the ternary complex, cyclin D1/CDK4/CDKN1B, required for nuclear translocation and activity of the cyclin D-CDK4 complex. Exhibits transcriptional corepressor activity with INSM1 on the NEUROD1 and INS promoters in a cell cycle-independent manner. This is G1/S-specific cyclin-D1 (Ccnd1) from Mus musculus (Mouse).